We begin with the raw amino-acid sequence, 542 residues long: Aspartate kinase FUB3 (542 aa).

2 consecutive ACT domains span residues isoleucine 404–aspartate 472 and leucine 478–isoleucine 542.

Belongs to the aspartokinase family.

It catalyses the reaction L-aspartate + ATP = 4-phospho-L-aspartate + ADP. Its pathway is mycotoxin biosynthesis. Functionally, aspartate kinase; part of the gene cluster that mediates the biosynthesis of fusaric acid, a mycotoxin with low to moderate toxicity to animals and humans, but with high phytotoxic properties. L-aspartate is suggested as fusaric acid amino acid precursor that is activated and further processed to O-acetyl-L-homoserine by cluster enzymes aspartate kinase FUB3 and homoserine O-acetyltransferase FUB5, as well as enzymes of the primary metabolism. The polyketide synthase (PKS) FUB1 generates the triketide trans-2-hexenal which is presumptively released by the hydrolase FUB4 and linked to the NRPS-bound amino acid precursor by NAD(P)-dependent dehydrogenase FUB6. FUB1, FUB4, and the non-canonical NRPS Fub8 may form an enzyme complex. Further processing of the NRPS-bound intermediate might be carried out by FUB6 and the sulfhydrylase FUB7, enabling a spontaneous electrocyclization to close the carbon backbone of fusaric acid. Dihydrofusaric acid is likely to be released via reduction by the thioester reductase (TR) domain of FUB8 whereupon the final oxidation to fusaric acid may (also) be performed by the FMN-dependent dehydrogenase FUB9. The sequence is that of Aspartate kinase FUB3 from Fusarium oxysporum f. sp. lycopersici (strain 4287 / CBS 123668 / FGSC 9935 / NRRL 34936) (Fusarium vascular wilt of tomato).